The following is a 223-amino-acid chain: GrpE protein homolog, mitochondrial (223 aa).

The protein belongs to the GrpE family. As to quaternary structure, component of the PAM complex, at least composed of mtHsp70, mge1, tim44, pam16, pam17 and pam18.

It localises to the mitochondrion matrix. In terms of biological role, essential component of the PAM complex, a complex required for the translocation of transit peptide-containing proteins from the inner membrane into the mitochondrial matrix in an ATP-dependent manner. Seems to control the nucleotide-dependent binding of ssc1 to substrate proteins. This is GrpE protein homolog, mitochondrial (mge1) from Schizosaccharomyces pombe (strain 972 / ATCC 24843) (Fission yeast).